A 325-amino-acid chain; its full sequence is D site-binding protein (325 aa).

3 disordered regions span residues 1-98, 124-203, and 230-256; these read MARP…AGPS, LEHG…EVLM, and FSEEELKPQPIMKKARKVQVPEEQKDE. The segment covering 17–28 has biased composition (gly residues); it reads GPAGAPPGGGAL. Residues 71 to 80 show a composition bias toward low complexity; that stretch reads AGPADAPSGA. Ser86 is subject to Phosphoserine. A compositionally biased stretch (low complexity) spans 88-98; the sequence is RGRSGPVAGPS. The span at 129–153 shows a compositional bias: pro residues; sequence PPSPPPPGGLSPAPSPARTPAPSPG. A compositionally biased stretch (low complexity) spans 154–171; sequence PGSCSSSSPRSSPGHAPA. One can recognise a bZIP domain in the interval 255–318; sequence DEKYWSRRYK…SHYRAVLSRY (64 aa). The basic motif stretch occupies residues 257 to 279; it reads KYWSRRYKNNEAAKRSRDARRLK. Positions 283 to 297 are leucine-zipper; that stretch reads ISVRAAFLEKENALL.

It belongs to the bZIP family. PAR subfamily. As to quaternary structure, binds DNA as a homodimer or a heterodimer. Can form a heterodimer with TEF. In terms of tissue distribution, expressed in the suprachiasmatic nuclei (SCN) and in most peripheral tissues, with a strong circadian rhythmicity.

The protein resides in the nucleus. Functionally, this transcriptional activator recognizes and binds to the sequence 5'-RTTAYGTAAY-3' found in the promoter of genes such as albumin, CYP2A4 and CYP2A5. It is not essential for circadian rhythm generation, but modulates important clock output genes. May be a direct target for regulation by the circadian pacemaker component clock. May affect circadian period and sleep regulation. This is D site-binding protein (Dbp) from Mus musculus (Mouse).